A 693-amino-acid polypeptide reads, in one-letter code: Protein-glutamine gamma-glutamyltransferase E (693 aa).

The residue at position 111 (Tyr111) is a Phosphotyrosine. Thr112 is modified (phosphothreonine). Ca(2+) contacts are provided by Ala222, Asn225, Asn227, and Asp228. The active site involves Cys273. Residues Asp302, Asp304, Asn306, Ser308, and Asp325 each contribute to the Ca(2+) site. Residues His331 and Asp354 contribute to the active site. 4 residues coordinate Ca(2+): Asn394, Thr416, Glu444, and Glu449. The disordered stretch occupies residues 455-482; it reads KAMNKLKPNASFGATSSRGPQGEEKEPS.

Belongs to the transglutaminase superfamily. Transglutaminase family. As to quaternary structure, consists of two polypeptide chains, which are synthesized as a precursor form of a single polypeptide. Requires Ca(2+) as cofactor. In terms of processing, activated by proteolytic processing. In vitro activation is commonly achieved by cleavage with dispase, a neutral bacterial protease. Physiological activation may be catalyzed by CTSL and, to a lesser extent, by CTSS.

Its subcellular location is the cytoplasm. The enzyme catalyses L-glutaminyl-[protein] + L-lysyl-[protein] = [protein]-L-lysyl-N(6)-5-L-glutamyl-[protein] + NH4(+). In terms of biological role, catalyzes the calcium-dependent formation of isopeptide cross-links between glutamine and lysine residues in various proteins, as well as the conjugation of polyamines to proteins. Involved in the formation of the cornified envelope (CE), a specialized component consisting of covalent cross-links of proteins beneath the plasma membrane of terminally differentiated keratinocytes. Catalyzes small proline-rich proteins and LOR cross-linking to form small interchain oligomers, which are further cross-linked by TGM1 onto the growing CE scaffold. In hair follicles, involved in cross-linking structural proteins to hardening the inner root sheath. The polypeptide is Protein-glutamine gamma-glutamyltransferase E (Tgm3) (Rattus norvegicus (Rat)).